The sequence spans 451 residues: Chromosomal replication initiator protein DnaA (451 aa).

The interval 1 to 72 (MQSIEDIWQE…ANILQEITGR (72 aa)) is domain I, interacts with DnaA modulators. The segment at 72 to 108 (RLFDVRFIDGEQEENFEYTVIKPNPALDEDGIEIGKH) is domain II. The interval 109–325 (MLNPRYVFDT…GALIRVVAYS (217 aa)) is domain III, AAA+ region. ATP is bound by residues G153, G155, K156, and T157. A domain IV, binds dsDNA region spans residues 326-451 (SLVNKDITAG…KNLRKSQNMF (126 aa)).

It belongs to the DnaA family. In terms of assembly, oligomerizes as a right-handed, spiral filament on DNA at oriC.

Its subcellular location is the cytoplasm. In terms of biological role, plays an essential role in the initiation and regulation of chromosomal replication. ATP-DnaA binds to the origin of replication (oriC) to initiate formation of the DNA replication initiation complex once per cell cycle. Binds the DnaA box (a 9 base pair repeat at the origin) and separates the double-stranded (ds)DNA. Forms a right-handed helical filament on oriC DNA; dsDNA binds to the exterior of the filament while single-stranded (ss)DNA is stabiized in the filament's interior. The ATP-DnaA-oriC complex binds and stabilizes one strand of the AT-rich DNA unwinding element (DUE), permitting loading of DNA polymerase. After initiation quickly degrades to an ADP-DnaA complex that is not apt for DNA replication. Binds acidic phospholipids. This Listeria welshimeri serovar 6b (strain ATCC 35897 / DSM 20650 / CCUG 15529 / CIP 8149 / NCTC 11857 / SLCC 5334 / V8) protein is Chromosomal replication initiator protein DnaA.